A 548-amino-acid chain; its full sequence is MWAPEEDYKQPLLTNSRVANNGNNNNSNGRGGSSSPSTRLQPEHSSRKCNDILFTILFLLVIGGMAAISGIAYTKGDPSRLVPNAPNIPSIPGFNTNTTSSENPIEQYFVSHLESLVAELKRDKDILIYSVLLAIALGAAWIQLLKSFTRFFIYFTLCVGVALVATLGGLFMALGHKEGSESTMIVGGCIIICTLVLVVVIVYLRKSIDLTCAMFTETCRGVQRSPSVFVIASLVVLFFIGFIAYWTSSFIYLFSIPGSTVNPLNDHTSSEANSTDSEQEQSAFNTKIRNLMYFMIFGFFWASSFISAVFQHCVAGVVSNWYFSRDPTGKSLVGQENAYRSLGRALSTSFGSLAFGSLLIAFIEFMAFMLRVCKNSNATNKLVVMVVSCLQCILGCIESIVRWINKFGYIYVAMHGHSFCTSTKECFDLISRNMFNAVIMDFIGGLVLLLGKILGSAASALFTTALLYGMGKSLNPITIALSAIFAFCIFNLFTHIVGIGTDTIFVCYLEDLETNKDGNLYISPDLHELLQDKCNECKEKEQKNQSKV.

Residues 1 to 44 (MWAPEEDYKQPLLTNSRVANNGNNNNSNGRGGSSSPSTRLQPEH) are disordered. Asparagine 25 carries an N-linked (GlcNAc...) asparagine glycan. A helical membrane pass occupies residues 52–72 (ILFTILFLLVIGGMAAISGIA). N-linked (GlcNAc...) asparagine glycosylation occurs at asparagine 97. The next 4 helical transmembrane spans lie at 125-145 (DILI…IQLL), 151-171 (FFIY…GGLF), 184-204 (MIVG…IVYL), and 226-246 (PSVF…IAYW). N-linked (GlcNAc...) asparagine glycosylation occurs at asparagine 273. The next 2 helical transmembrane spans lie at 290–310 (NLMY…SAVF) and 350–370 (FGSL…AFML). Asparagine 377 is a glycosylation site (N-linked (GlcNAc...) asparagine). 3 consecutive transmembrane segments (helical) span residues 381–401 (KLVV…ESIV), 442–462 (FIGG…SALF), and 479–499 (IALS…IVGI). Asparagine 544 carries N-linked (GlcNAc...) asparagine glycosylation.

It belongs to the CTL (choline transporter-like) family.

The protein resides in the membrane. This chain is CTL-like protein DDB_G0288717, found in Dictyostelium discoideum (Social amoeba).